A 343-amino-acid polypeptide reads, in one-letter code: N-acetyl-gamma-glutamyl-phosphate reductase (343 aa).

Cys-146 is an active-site residue.

Belongs to the NAGSA dehydrogenase family. Type 1 subfamily.

It localises to the cytoplasm. The enzyme catalyses N-acetyl-L-glutamate 5-semialdehyde + phosphate + NADP(+) = N-acetyl-L-glutamyl 5-phosphate + NADPH + H(+). Its pathway is amino-acid biosynthesis; L-arginine biosynthesis; N(2)-acetyl-L-ornithine from L-glutamate: step 3/4. In terms of biological role, catalyzes the NADPH-dependent reduction of N-acetyl-5-glutamyl phosphate to yield N-acetyl-L-glutamate 5-semialdehyde. The polypeptide is N-acetyl-gamma-glutamyl-phosphate reductase (Acidothermus cellulolyticus (strain ATCC 43068 / DSM 8971 / 11B)).